Consider the following 779-residue polypeptide: 3-isopropylmalate dehydratase (779 aa).

Residues Cys-360, Cys-421, and Cys-424 each contribute to the [4Fe-4S] cluster site. Residues 484-518 (QDQSSPKVEVTSEDEKELESAAYDHAEPVQPEDAP) form a disordered region. Ser-488 bears the Phosphoserine mark. A Phosphothreonine modification is found at Thr-494. Ser-495 is modified (phosphoserine). Residues 501 to 510 (LESAAYDHAE) are compositionally biased toward basic and acidic residues.

The protein belongs to the aconitase/IPM isomerase family. Monomer. [4Fe-4S] cluster serves as cofactor.

It carries out the reaction (2R,3S)-3-isopropylmalate = (2S)-2-isopropylmalate. The protein operates within amino-acid biosynthesis; L-leucine biosynthesis; L-leucine from 3-methyl-2-oxobutanoate: step 2/4. Functionally, catalyzes the isomerization between 2-isopropylmalate and 3-isopropylmalate, via the formation of 2-isopropylmaleate. In Saccharomyces cerevisiae (strain ATCC 204508 / S288c) (Baker's yeast), this protein is 3-isopropylmalate dehydratase (LEU1).